Reading from the N-terminus, the 1358-residue chain is DNA mismatch repair protein Msh6 (1358 aa).

Residues 1–87 (MSRQSTLYSF…SSAQAVPPSS (87 aa)) are disordered. S14, S38, and S40 each carry phosphoserine. Low complexity predominate over residues 25-46 (AEASRQGAAASGASASRGGDAA). K67 bears the N6-acetyllysine mark. A compositionally biased stretch (low complexity) spans 76–87 (ASSSAQAVPPSS). Phosphoserine is present on residues S91, S137, S200, S219, and S227. A PWWP domain is found at 92–154 (PGDLVWAKME…KRMLKPYTGS (63 aa)). The disordered stretch occupies residues 197–360 (DEPSEPEEEE…VSGGGNDSSG (164 aa)). Acidic residues-rich tracts occupy residues 198–209 (EPSEPEEEEETE) and 219–231 (SEED…EEEA). The segment covering 240–249 (RSSRQVKKRR) has biased composition (basic residues). Residues S252, S254, S256, and S261 each carry the phosphoserine modification. Over residues 263 to 273 (VEFKPDTKQEG) the composition is skewed to basic and acidic residues. T269 bears the Phosphothreonine mark. A phosphoserine mark is found at S274, S275, S279, and S280. The span at 329 to 351 (LSETKSTLSAFSAPQNSESQTHV) shows a compositional bias: polar residues. A Phosphothreonine modification is found at T487. The residue at position 503 (K503) is an N6-acetyllysine. Residues S827 and S932 each carry the phosphoserine modification. T1007 bears the Phosphothreonine mark. ATP is bound at residue 1132 to 1139 (GPNMGGKS).

Belongs to the DNA mismatch repair MutS family. As to quaternary structure, component of the DNA mismatch repair (MMR) complex composed at least of MSH2, MSH3, MSH6, PMS1 and MLH1. Heterodimer consisting of MSH2-MSH6 (MutS alpha). Forms a ternary complex with MutL alpha (MLH1-PMS1). Interacts with MCM9. Part of the BRCA1-associated genome surveillance complex (BASC), which contains BRCA1, MSH2, MSH6, MLH1, ATM, BLM, PMS2 and the RAD50-MRE11-NBS1 protein complex. This association could be a dynamic process changing throughout the cell cycle and within subnuclear domains. Post-translationally, phosphorylated by PRKCZ, which may prevent MutS alpha degradation by the ubiquitin-proteasome pathway.

The protein resides in the nucleus. It localises to the chromosome. Functionally, component of the post-replicative DNA mismatch repair system (MMR). Heterodimerizes with MSH2 to form MutS alpha, which binds to DNA mismatches thereby initiating DNA repair. When bound, MutS alpha bends the DNA helix and shields approximately 20 base pairs, and recognizes single base mismatches and dinucleotide insertion-deletion loops (IDL) in the DNA. After mismatch binding, forms a ternary complex with the MutL alpha heterodimer, which is thought to be responsible for directing the downstream MMR events, including strand discrimination, excision, and resynthesis. ATP binding and hydrolysis play a pivotal role in mismatch repair functions. The ATPase activity associated with MutS alpha regulates binding similar to a molecular switch: mismatched DNA provokes ADP--&gt;ATP exchange, resulting in a discernible conformational transition that converts MutS alpha into a sliding clamp capable of hydrolysis-independent diffusion along the DNA backbone. This transition is crucial for mismatch repair. MutS alpha may also play a role in DNA homologous recombination repair. Recruited on chromatin in G1 and early S phase via its PWWP domain that specifically binds trimethylated 'Lys-36' of histone H3 (H3K36me3): early recruitment to chromatin to be replicated allowing a quick identification of mismatch repair to initiate the DNA mismatch repair reaction. The polypeptide is DNA mismatch repair protein Msh6 (Mus musculus (Mouse)).